The following is a 61-amino-acid chain: Large ribosomal subunit protein uL30 (61 aa).

The protein belongs to the universal ribosomal protein uL30 family. In terms of assembly, part of the 50S ribosomal subunit.

This is Large ribosomal subunit protein uL30 from Thermosipho melanesiensis (strain DSM 12029 / CIP 104789 / BI429).